The following is a 561-amino-acid chain: Oligo-1,6-glucosidase 1 (561 aa).

Residues Asp-20, Asn-22, Asp-24, Phe-26, and Asp-28 each contribute to the Ca(2+) site. The active-site Nucleophile is Asp-199. The Proton donor role is filled by Glu-255.

This sequence belongs to the glycosyl hydrolase 13 family.

It localises to the cytoplasm. The catalysed reaction is Hydrolysis of (1-&gt;6)-alpha-D-glucosidic linkages in some oligosaccharides produced from starch and glycogen by alpha-amylase, and in isomaltose.. Hydrolyzes various disaccharides such as sucrose, maltose, and isomaltose with different efficiencies. Also hydrolyzes longer maltodextrins from maltotriose up to maltohexaose, but not maltoheptaose, palatinose, isomaltotriose, or isomaltotetraose. The sequence is that of Oligo-1,6-glucosidase 1 (malL) from Bacillus subtilis (strain 168).